The primary structure comprises 283 residues: Protease HtpX (283 aa).

The next 2 helical transmembrane spans lie at Ile4–Val24 and Gly33–Leu53. His139 is a Zn(2+) binding site. Glu140 is an active-site residue. Position 143 (His143) interacts with Zn(2+). Helical transmembrane passes span Gly147 to Ser167 and Ile190 to Ala210. Glu218 contributes to the Zn(2+) binding site.

The protein belongs to the peptidase M48B family. Zn(2+) is required as a cofactor.

Its subcellular location is the cell inner membrane. In Haemophilus influenzae (strain 86-028NP), this protein is Protease HtpX.